The following is a 156-amino-acid chain: Ribosome maturation factor RimP (156 aa).

The protein belongs to the RimP family.

The protein localises to the cytoplasm. In terms of biological role, required for maturation of 30S ribosomal subunits. This chain is Ribosome maturation factor RimP, found in Bacillus subtilis (strain 168).